We begin with the raw amino-acid sequence, 146 residues long: Hemoglobin subunit beta (146 aa).

Val-1 is subject to N-acetylvaline. Positions 2 to 146 constitute a Globin domain; the sequence is HLTAEEKSLV…VANALAHKYH (145 aa). Thr-12 bears the Phosphothreonine mark. Ser-44 bears the Phosphoserine mark. Residue Lys-59 is modified to N6-acetyllysine. His-63 contacts heme b. Position 82 is an N6-acetyllysine (Lys-82). Position 92 (His-92) interacts with heme b. At Cys-93 the chain carries S-nitrosocysteine. Lys-144 carries the post-translational modification N6-acetyllysine.

Belongs to the globin family. In terms of assembly, heterotetramer of two alpha chains and two beta chains. In terms of tissue distribution, red blood cells.

In terms of biological role, involved in oxygen transport from the lung to the various peripheral tissues. This chain is Hemoglobin subunit beta (HBB), found in Vulpes vulpes (Red fox).